Reading from the N-terminus, the 312-residue chain is Short chain dehydrogenase pgmD (312 aa).

Residues Val-46, Ile-47, Lys-171, Tyr-207, Lys-211, and Thr-242 each contribute to the NADP(+) site. Residue Tyr-207 is the Proton donor of the active site. Catalysis depends on Lys-211, which acts as the Lowers pKa of active site Tyr.

Belongs to the short-chain dehydrogenases/reductases (SDR) family.

It participates in pigment biosynthesis. The protein operates within secondary metabolite biosynthesis. Functionally, short chain dehydrogenase; part of the gene cluster that mediates the biosynthesis of pleosporalin A, ascomycone A, as well as a third cryptic naphthoquinone derived pigment, all responsible for the coloration of conidia. Essential for the production of pleosporalin A, but not the 2 other final products. The pathway begins with the biosynthesis of the cyclized heptaketide 3-acetonyl-1,6,8-trihydroxy-2-naphthaldehyde by the NR-PKS pgmA. The C-6 hydroxyl group is further methylated by the O-methyltransferase pgmB to yield fusarubinaldehyde which is in turn oxidized by the cytochrome P450 monooxygenase pgmC at C-9. The C-1 hydroxyl group is then methylated spontaneously. Although pgmE, pgmD and pgmH are essential for the production of pleosporalin A, it is not the case for the 2 other final products and it remains difficult to assign a specific function to each enzyme. PgmF and pgmG seem not to be involved in pigment biosynthesis although they were regulated by the cluster-specific transcription factor pgmR. The sequence is that of Short chain dehydrogenase pgmD from Aspergillus terreus (strain NIH 2624 / FGSC A1156).